A 342-amino-acid polypeptide reads, in one-letter code: L-threonine 3-dehydrogenase (342 aa).

C38 is a Zn(2+) binding site. Residues T40 and H43 each act as charge relay system in the active site. Residues H63, E64, C93, C96, C99, and C107 each coordinate Zn(2+). NAD(+)-binding positions include V175, D195, R200, L262–I264, and I286–Y287.

It belongs to the zinc-containing alcohol dehydrogenase family. In terms of assembly, homotetramer. Zn(2+) serves as cofactor.

The protein resides in the cytoplasm. It carries out the reaction L-threonine + NAD(+) = (2S)-2-amino-3-oxobutanoate + NADH + H(+). It functions in the pathway amino-acid degradation; L-threonine degradation via oxydo-reductase pathway; glycine from L-threonine: step 1/2. Functionally, catalyzes the NAD(+)-dependent oxidation of L-threonine to 2-amino-3-ketobutyrate. This Coxiella burnetii (strain Dugway 5J108-111) protein is L-threonine 3-dehydrogenase.